A 323-amino-acid chain; its full sequence is uncharacterized protein (323 aa).

3 helical membrane-spanning segments follow: residues 8 to 28 (FLVIILVFLAVILTELIMFME), 32 to 52 (LTLLKCFIFVDLLLVFIPFSL), and 92 to 112 (ITIFWVYTIWNGLNSIFCGIF).

It localises to the mitochondrion membrane. This is an uncharacterized protein from Neurospora crassa (strain ATCC 24698 / 74-OR23-1A / CBS 708.71 / DSM 1257 / FGSC 987).